A 67-amino-acid polypeptide reads, in one-letter code: Small ribosomal subunit protein eS17 (67 aa).

The protein belongs to the eukaryotic ribosomal protein eS17 family.

In Thermococcus sibiricus (strain DSM 12597 / MM 739), this protein is Small ribosomal subunit protein eS17.